The chain runs to 256 residues: 3-deoxy-manno-octulosonate cytidylyltransferase (256 aa).

Belongs to the KdsB family.

The protein resides in the cytoplasm. It carries out the reaction 3-deoxy-alpha-D-manno-oct-2-ulosonate + CTP = CMP-3-deoxy-beta-D-manno-octulosonate + diphosphate. It participates in nucleotide-sugar biosynthesis; CMP-3-deoxy-D-manno-octulosonate biosynthesis; CMP-3-deoxy-D-manno-octulosonate from 3-deoxy-D-manno-octulosonate and CTP: step 1/1. It functions in the pathway bacterial outer membrane biogenesis; lipopolysaccharide biosynthesis. Its function is as follows. Activates KDO (a required 8-carbon sugar) for incorporation into bacterial lipopolysaccharide in Gram-negative bacteria. The polypeptide is 3-deoxy-manno-octulosonate cytidylyltransferase (Histophilus somni (strain 129Pt) (Haemophilus somnus)).